A 449-amino-acid chain; its full sequence is uncharacterized protein (449 aa).

A signal peptide spans 1-20 (MWTALVLIWIFSLSLSESHA). The Extracellular segment spans residues 21-400 (ASNDPRNFVP…PLTQAVVDKT (380 aa)). Asn49 carries an N-linked (GlcNAc...) asparagine glycan. 3 disordered regions span residues 72–101 (AHLN…AADG), 154–187 (MTAA…GHPS), and 215–381 (QTVA…PSTQ). Low complexity-rich tracts occupy residues 154–184 (MTAA…TATG) and 215–234 (QTVA…PSPS). 2 stretches are compositionally biased toward polar residues: residues 255–279 (GPIS…MPSN) and 352–367 (TPGT…SSGG). Residues 401–421 (LLLVVLLLGVTLFITVLVLFA) form a helical membrane-spanning segment. Over 422 to 449 (LQAYESYKKKDYTQVDYLINGMYADSEM) the chain is Cytoplasmic.

Highest expression in heart, placenta, liver, pancreas and colon. Also detected in brain, lung, skeletal muscle, kidney, spleen, prostate, testis, ovary and small intestine. Lowest expression in thymus and leukocytes.

It localises to the cell membrane. The protein localises to the golgi apparatus. It is found in the trans-Golgi network membrane. This is an uncharacterized protein from Homo sapiens (Human).